We begin with the raw amino-acid sequence, 758 residues long: ATP-dependent RNA helicase dbp7 (758 aa).

2 disordered regions span residues 28–98 (TWRD…NQPR) and 110–130 (EPQKAEEVKEEGHVENAKPTN). Positions 35–45 (AKKIAKHHAKG) are enriched in basic residues. Polar residues predominate over residues 84-98 (GKQQSHGHPHSNQPR). A compositionally biased stretch (basic and acidic residues) spans 110–125 (EPQKAEEVKEEGHVEN). A Q motif motif is present at residues 138-167 (DTFTNLGLSPNLAAHLLTKLELKAPTAIQK). Residues 171-372 (SQLLKEEGDA…EISLKDAVHI (202 aa)) form the Helicase ATP-binding domain. 184-191 (AETGSGKT) is a binding site for ATP. A DEAD box motif is present at residues 308–311 (DEGD). The Helicase C-terminal domain occupies 398-620 (QLKQSYAVVA…NVESGNKDWE (223 aa)). Composition is skewed to basic and acidic residues over residues 455-471 (KEDGGEPSDTDKSEEKP) and 697-709 (GKEETKKDFKAER). Disordered regions lie at residues 455 to 483 (KEDGGEPSDTDKSEEKPPSSPHGTIAPAT) and 697 to 745 (GKEE…RAKM).

It belongs to the DEAD box helicase family. DDX31/DBP7 subfamily.

Its subcellular location is the nucleus. It is found in the nucleolus. The enzyme catalyses ATP + H2O = ADP + phosphate + H(+). In terms of biological role, ATP-binding RNA helicase involved in the biogenesis of 60S ribosomal subunits and is required for the normal formation of 25S and 5.8S rRNAs. This chain is ATP-dependent RNA helicase dbp7 (dbp7), found in Aspergillus fumigatus (strain ATCC MYA-4609 / CBS 101355 / FGSC A1100 / Af293) (Neosartorya fumigata).